We begin with the raw amino-acid sequence, 439 residues long: MTILRTMRNFSSMNIAASILLFVAAIAAAIIANSPVAPVYQEFLLHELHLQIGNFNLLSHGGENLRMIEFINDGLMTIFFLLVGLEIKRELLVGELSSFRKAALPFIAACGGMLFPVIVYMSICPPGSAGSQGLAIPMATDIAFSLGVLSLLGSRVPLSLKIFLTAFAVVDDIGGILVIALFYSSHVSYGYILIAALLYVLLYFIGKRGTTNKIFFLVIGVVIWYLFLQSGIHSTISGVILAFVIPAKPRLDVGKYIEHIRHTIAGFPVVESGSIVLTNEQIAKLKEVESASDRVISPLQSLEDNLHGAVNYLILPLFAFVNAGVVFSGGGELVGSVGMAVAAGLLFGKFAGIYFFTWLAIKIKLTPMPPGMTWKNLSGIALLGGIGFTVSLFIANLSFGANYPVLLNQAKFGVLSGTILSGLLGYIVLRIVLPVRKRK.

The next 11 helical transmembrane spans lie at 12 to 32 (SMNI…AIIA), 67 to 87 (MIEF…GLEI), 103 to 123 (ALPF…YMSI), 133 to 153 (GLAI…SLLG), 162 to 182 (IFLT…IALF), 186 to 206 (HVSY…YFIG), 214 to 234 (IFFL…GIHS), 314 to 334 (ILPL…GELV), 341 to 361 (VAAG…WLAI), 379 to 399 (GIAL…NLSF), and 412 to 432 (FGVL…LRIV).

This sequence belongs to the NhaA Na(+)/H(+) (TC 2.A.33) antiporter family.

The protein localises to the cell inner membrane. It carries out the reaction Na(+)(in) + 2 H(+)(out) = Na(+)(out) + 2 H(+)(in). Functionally, na(+)/H(+) antiporter that extrudes sodium in exchange for external protons. The chain is Na(+)/H(+) antiporter NhaA from Bacteroides thetaiotaomicron (strain ATCC 29148 / DSM 2079 / JCM 5827 / CCUG 10774 / NCTC 10582 / VPI-5482 / E50).